The primary structure comprises 626 residues: MVVQHNQPGSTDQSVIRNFCIIAHIDHGKSTVADRILQLSGIVPEREMRDRFLDRMDIEQERGITIKSQAVRVPWTFDGTEYTLGMIDTPGHVDFTYEVSRALAACEGAVLLVDATQGIEAQTLSNLYMAIDHDLAIIPVLNKIDLPSAEPDKHAEEIAGLIGCEPSDVLRVSGKTGEGVADLLDQIVMDVPAPHGDPDAPARALIFDSVYDSYRGIVTYIRMEDGELHDREKVHMMGIGMTHDPIEIGVISPDMTRTKALGAGEVGYIITGAKDVSQSKVGDTLTSAVRPAAEPLPGYRDPKPMVYAGLFPIDNAQFPELRDALDKLKLNDAALIYTPETSVALGFGFRCGFLGLLHMEIVNERLSREFGLDLIQTAPNVTYDVTAEDGSQHHVTNPSEFPDGKIKKIVEPMVAADIITPKEFIGAVMDLCQDHRGIMGTMEYISTDRVEMHYRIPLAEIVFDFFDQLKSRTKGYASLDYHEDGEQSADLVKVDILIQGEKVDAFSAIVHRDKAYSYGVMMTKKLRSLIPRQQFEIPIQAAIGSRIIARENIRALRKDVLAKCYGGDITRKRKLLEKQKAGKKRMKMLGHVEVPQEAFIAALSTGEDSNDRDTKDKIRAAQKTEG.

Residues 14-195 (SVIRNFCIIA…QIVMDVPAPH (182 aa)) form the tr-type G domain. Residues 26-31 (DHGKST) and 142-145 (NKID) each bind GTP. A disordered region spans residues 603–626 (LSTGEDSNDRDTKDKIRAAQKTEG). Residues 609 to 626 (SNDRDTKDKIRAAQKTEG) are compositionally biased toward basic and acidic residues.

Belongs to the TRAFAC class translation factor GTPase superfamily. Classic translation factor GTPase family. LepA subfamily.

It localises to the cell membrane. It carries out the reaction GTP + H2O = GDP + phosphate + H(+). Functionally, required for accurate and efficient protein synthesis under certain stress conditions. May act as a fidelity factor of the translation reaction, by catalyzing a one-codon backward translocation of tRNAs on improperly translocated ribosomes. Back-translocation proceeds from a post-translocation (POST) complex to a pre-translocation (PRE) complex, thus giving elongation factor G a second chance to translocate the tRNAs correctly. Binds to ribosomes in a GTP-dependent manner. This chain is Elongation factor 4, found in Bifidobacterium longum (strain DJO10A).